A 113-amino-acid polypeptide reads, in one-letter code: uncharacterized protein (113 aa).

The disordered stretch occupies residues 94–113 (SKTGLDEQAHVQKAHDVQDV). Over residues 96–113 (TGLDEQAHVQKAHDVQDV) the composition is skewed to basic and acidic residues.

It belongs to the geminiviridae protein AV2/V2 family. In terms of assembly, interacts with host SGS3.

It localises to the host cytoplasm. The protein resides in the host perinuclear region. Functionally, through its interaction with host SGS3, acts as a suppressor of RNA-mediated gene silencing, also known as post-transcriptional gene silencing (PTGS), a mechanism of plant viral defense that limits the accumulation of viral RNAs. This is an uncharacterized protein from African cassava mosaic virus (isolate Nigerian) (ACMV).